We begin with the raw amino-acid sequence, 188 residues long: RWD domain-containing protein 4 (188 aa).

Ser-2 carries the post-translational modification N-acetylserine. One can recognise an RWD domain in the interval 9–111; that stretch reads MELEALRSIY…EYAKDNKEQF (103 aa). A disordered region spans residues 132–167; sequence TPNTAPSSKKKDKKEQLSKAQKRKLADKTDHKGELP. A compositionally biased stretch (basic and acidic residues) spans 155-166; the sequence is KLADKTDHKGEL.

The chain is RWD domain-containing protein 4 (RWDD4) from Homo sapiens (Human).